Reading from the N-terminus, the 632-residue chain is Golgin subfamily A member 8M (632 aa).

Residues 1–77 (MAEETQHNKL…SSATLKDLES (77 aa)) are disordered. The span at 38-50 (TNGSIPQTATSGG) shows a compositional bias: polar residues. Coiled coils occupy residues 86–154 (LDSR…HMKR) and 209–421 (KLEQ…SLMA). Positions 352–362 (KQEERIQEQHK) are enriched in basic and acidic residues. 3 disordered regions span residues 352 to 384 (KQEE…NKST), 422 to 456 (LPGE…REAM), and 505 to 524 (DAAL…DEGE). The segment covering 508–520 (LGGGHHQAGAQGG) has biased composition (gly residues).

Belongs to the GOLGA8 family.

The sequence is that of Golgin subfamily A member 8M from Homo sapiens (Human).